Consider the following 398-residue polypeptide: Acetate kinase 1 (398 aa).

Asn9 is a Mg(2+) binding site. Residue Lys16 coordinates ATP. Residue Arg89 coordinates substrate. Residue Asp146 is the Proton donor/acceptor of the active site. ATP is bound by residues 206 to 210 (HLGNG), 281 to 283 (DCR), and 329 to 333 (GIGEN). Glu384 is a Mg(2+) binding site.

It belongs to the acetokinase family. Homodimer. Mg(2+) is required as a cofactor. Mn(2+) serves as cofactor.

The protein resides in the cytoplasm. The catalysed reaction is acetate + ATP = acetyl phosphate + ADP. The protein operates within metabolic intermediate biosynthesis; acetyl-CoA biosynthesis; acetyl-CoA from acetate: step 1/2. In terms of biological role, catalyzes the formation of acetyl phosphate from acetate and ATP. Can also catalyze the reverse reaction. This chain is Acetate kinase 1, found in Vibrio vulnificus (strain CMCP6).